The chain runs to 188 residues: Phosphatidylinositol N-acetylglucosaminyltransferase subunit H (188 aa).

Belongs to the PIGH family. As to quaternary structure, component of the glycosylphosphatidylinositol-N-acetylglucosaminyltransferase (GPI-GnT) complex composed at least by PIGA, PIGC, PIGH, PIGP, PIGQ, PIGY and DPM2. Interacts with PIGQ.

Its subcellular location is the cytoplasm. Its pathway is glycolipid biosynthesis; glycosylphosphatidylinositol-anchor biosynthesis. Functionally, part of the glycosylphosphatidylinositol-N-acetylglucosaminyltransferase (GPI-GnT) complex that catalyzes the transfer of N-acetylglucosamine from UDP-N-acetylglucosamine to phosphatidylinositol and participates in the first step of GPI biosynthesis. This is Phosphatidylinositol N-acetylglucosaminyltransferase subunit H from Bos taurus (Bovine).